The following is a 198-amino-acid chain: DnaJ homolog subfamily C member 5 (198 aa).

Phosphoserine is present on residues Ser8, Ser10, Ser12, and Ser15. The 70-residue stretch at Gly13–Leu82 folds into the J domain. Tyr17 carries the post-translational modification Phosphotyrosine. Residue Lys56 is modified to N6-acetyllysine. The residue at position 151 (Ser151) is a Phosphoserine.

Homodimer. Interacts with the chaperone complex consisting of HSC70 and SGTA. Interacts with ZDHHC13 (via ANK repeats). Interacts with ZDHHC17 (via ANK repeats). Interacts with SYT1, SYT5 and SYT7, and with SYT9, forming a complex with SNAP25. The interaction with SYT9 is stimulated tenfold in presence of calcium. In terms of processing, formation of the chaperone complex DNAJC5/HSC70 is not regulated by phosphorylation. Ser-10 phosphorylation induces an order-to-disorder transition triggering the interaction with Lys-58. This conformational switch modulates DNAJC5's cellular functions by reducing binding to syntaxin and synaptogamin without altering HSC70 interactions. Palmitoylated. Could be palmitoylated by DHHC3, DHHC7, DHHC15 and DHHC17. Palmitoylation occurs probably in the cysteine-rich domain and regulates DNAJC5 membrane attachment.

It is found in the cytoplasm. The protein resides in the cytosol. Its subcellular location is the membrane. It localises to the cytoplasmic vesicle. The protein localises to the secretory vesicle. It is found in the chromaffin granule membrane. The protein resides in the melanosome. Its subcellular location is the cell membrane. Acts as a co-chaperone for the SNARE protein SNAP-25. Involved in the calcium-mediated control of a late stage of exocytosis. Acts as a general chaperone in regulated exocytosis. May have an important role in presynaptic function. May be involved in calcium-dependent neurotransmitter release at nerve endings. The sequence is that of DnaJ homolog subfamily C member 5 from Mus musculus (Mouse).